The primary structure comprises 485 residues: N-succinylglutamate 5-semialdehyde dehydrogenase (485 aa).

220-225 (GSANTG) is an NAD(+) binding site. Catalysis depends on residues Glu243 and Cys278.

It belongs to the aldehyde dehydrogenase family. AstD subfamily.

It carries out the reaction N-succinyl-L-glutamate 5-semialdehyde + NAD(+) + H2O = N-succinyl-L-glutamate + NADH + 2 H(+). It participates in amino-acid degradation; L-arginine degradation via AST pathway; L-glutamate and succinate from L-arginine: step 4/5. Catalyzes the NAD-dependent reduction of succinylglutamate semialdehyde into succinylglutamate. This chain is N-succinylglutamate 5-semialdehyde dehydrogenase, found in Vibrio atlanticus (strain LGP32) (Vibrio splendidus (strain Mel32)).